We begin with the raw amino-acid sequence, 58 residues long: MSEVKIGKNESLDSALRRFKRQLQRAGVLAEIRKREHYEKPSVKRKKKSEAARRRKYR.

The segment at 36 to 58 (EHYEKPSVKRKKKSEAARRRKYR) is disordered. The span at 43-58 (VKRKKKSEAARRRKYR) shows a compositional bias: basic residues.

This sequence belongs to the bacterial ribosomal protein bS21 family.

The polypeptide is Small ribosomal subunit protein bS21 (Symbiobacterium thermophilum (strain DSM 24528 / JCM 14929 / IAM 14863 / T)).